A 434-amino-acid polypeptide reads, in one-letter code: ATP-dependent protease ATPase subunit HslU (434 aa).

ATP-binding positions include Ile-18, 60-65 (GVGKTE), Asp-247, Glu-312, and Arg-384.

It belongs to the ClpX chaperone family. HslU subfamily. A double ring-shaped homohexamer of HslV is capped on each side by a ring-shaped HslU homohexamer. The assembly of the HslU/HslV complex is dependent on binding of ATP.

The protein resides in the cytoplasm. ATPase subunit of a proteasome-like degradation complex; this subunit has chaperone activity. The binding of ATP and its subsequent hydrolysis by HslU are essential for unfolding of protein substrates subsequently hydrolyzed by HslV. HslU recognizes the N-terminal part of its protein substrates and unfolds these before they are guided to HslV for hydrolysis. This is ATP-dependent protease ATPase subunit HslU from Sinorhizobium fredii (strain NBRC 101917 / NGR234).